The following is a 720-amino-acid chain: F-box/LRR-repeat MAX2 homolog (720 aa).

An F-box domain is found at 14–60; that stretch reads SSAILDLPEPLLLHILSFLTDVRSRHRAALACGRMRAAERATRSELS. 18 LRR repeats span residues 71–134, 135–158, 159–189, 190–218, 219–247, 248–279, 280–316, 317–344, 345–372, 373–398, 399–435, 436–452, 453–510, 511–537, 538–571, 572–606, 607–644, and 645–720; these read LFLS…QNAF, IAAR…DPTT, LANL…PDGA, DLEP…DVVR, ALTT…FKSS, ELGP…VGDD, ALLS…ITVA, GLVA…EAAP, AMEA…KASW, LHLD…LTDA, SLAA…TLRP, TLKE…HTAE, CLTA…KCRY, MEFD…LLSP, LISA…PRTI, FGLS…GQMD, LSLW…SLTL, and PAVG…QIDD.

Associates to a SCF (SKP1-CUL1-F-box protein) E3 ubiquitin-protein ligase complex. Interacts with D14 in a strigolactone-dependent manner. Interacts with SKP1, SKP5 and SKP20. In terms of tissue distribution, expressed in leaves. Expressed in roots, culms, leaf blades, leaf sheaths, shoot bases and panicles.

The protein resides in the nucleus. Involved in strigolactone (SL) signaling. Required for responses to SLs and the establishment of arbuscular mycorrhiza symbiosis in rice. Strigolactone-dependent association of D3 with D14 and D53 (a repressor of SL signaling) triggers D53 ubiquitination and degradation. Controls tillering by suppressing axillary bud activity. Tiller is a specialized grain-bearing branch that is formed on the unelongated basal internode and grows independently of the mother stem (culm) by means of its own adventitious roots. In Oryza sativa subsp. japonica (Rice), this protein is F-box/LRR-repeat MAX2 homolog.